The primary structure comprises 142 residues: Small ribosomal subunit protein uS12 (142 aa).

A disordered region spans residues 1 to 30; it reads MGKTRGMGAARKLKNHRRRQRWADKSYKKS. Residues 11-20 are compositionally biased toward basic residues; it reads RKLKNHRRRQ. A compositionally biased stretch (basic and acidic residues) spans 21-30; it reads RWADKSYKKS. Position 61 is a hydroxyproline (Pro-61).

This sequence belongs to the universal ribosomal protein uS12 family.

The protein is Small ribosomal subunit protein uS12 (RPS23) of Fragaria ananassa (Strawberry).